The chain runs to 332 residues: Glyceraldehyde-3-phosphate dehydrogenase (332 aa).

NAD(+) is bound by residues Arg10–Ile11, Asp32, and Met77. Residues Ser148–Thr150, Thr179, Thr208–Gly209, and Arg231 each bind D-glyceraldehyde 3-phosphate. The active-site Nucleophile is Cys149. Asn313 is a binding site for NAD(+).

Belongs to the glyceraldehyde-3-phosphate dehydrogenase family. As to quaternary structure, homotetramer.

It is found in the cytoplasm. It carries out the reaction D-glyceraldehyde 3-phosphate + phosphate + NAD(+) = (2R)-3-phospho-glyceroyl phosphate + NADH + H(+). It functions in the pathway carbohydrate degradation; glycolysis; pyruvate from D-glyceraldehyde 3-phosphate: step 1/5. This is Glyceraldehyde-3-phosphate dehydrogenase (GPDA) from Phytophthora infestans (Potato late blight agent).